Reading from the N-terminus, the 308-residue chain is Probable dimethyladenosine transferase (308 aa).

Over residues Met1–Lys11 the composition is skewed to basic residues. Residues Met1–Phe24 are disordered. Over residues Ala12–Phe24 the composition is skewed to polar residues. Residues His31, Leu33, Gly58, Glu79, Asp107, and Asn122 each coordinate S-adenosyl-L-methionine.

This sequence belongs to the class I-like SAM-binding methyltransferase superfamily. rRNA adenine N(6)-methyltransferase family. Part of the small subunit (SSU) processome, composed of more than 70 proteins and the RNA chaperone small nucleolar RNA (snoRNA) U3.

It localises to the nucleus. The protein localises to the nucleolus. It carries out the reaction adenosine(1779)/adenosine(1780) in 18S rRNA + 4 S-adenosyl-L-methionine = N(6)-dimethyladenosine(1779)/N(6)-dimethyladenosine(1780) in 18S rRNA + 4 S-adenosyl-L-homocysteine + 4 H(+). Functionally, specifically dimethylates two adjacent adenosines in the loop of a conserved hairpin near the 3'-end of 18S rRNA in the 40S particle. Involved in the pre-rRNA processing steps leading to small-subunit rRNA production independently of its RNA-modifying catalytic activity. Part of the small subunit (SSU) processome, first precursor of the small eukaryotic ribosomal subunit. During the assembly of the SSU processome in the nucleolus, many ribosome biogenesis factors, an RNA chaperone and ribosomal proteins associate with the nascent pre-rRNA and work in concert to generate RNA folding, modifications, rearrangements and cleavage as well as targeted degradation of pre-ribosomal RNA by the RNA exosome. In Caenorhabditis elegans, this protein is Probable dimethyladenosine transferase.